Here is a 229-residue protein sequence, read N- to C-terminus: GTP cyclohydrolase 1 (229 aa).

A disordered region spans residues 1–21; it reads MDAKIKPLRAGKSADARTDFQ. 3 residues coordinate Zn(2+): cysteine 118, histidine 121, and cysteine 189.

It belongs to the GTP cyclohydrolase I family. Toroid-shaped homodecamer, composed of two pentamers of five dimers.

The catalysed reaction is GTP + H2O = 7,8-dihydroneopterin 3'-triphosphate + formate + H(+). It functions in the pathway cofactor biosynthesis; 7,8-dihydroneopterin triphosphate biosynthesis; 7,8-dihydroneopterin triphosphate from GTP: step 1/1. The protein is GTP cyclohydrolase 1 of Rhodopseudomonas palustris (strain HaA2).